We begin with the raw amino-acid sequence, 98 residues long: MPGITREEVAHLARLARLELKAEELDHFAGQLDDIIGAVARVSEVADQDVPPTSHPLPLTNVMRADEVRPSLTPEQALSGAPAQEQQRFKVPQILGED.

Positions 70–98 (PSLTPEQALSGAPAQEQQRFKVPQILGED) are disordered.

Belongs to the GatC family. Heterotrimer of A, B and C subunits.

It carries out the reaction L-glutamyl-tRNA(Gln) + L-glutamine + ATP + H2O = L-glutaminyl-tRNA(Gln) + L-glutamate + ADP + phosphate + H(+). The enzyme catalyses L-aspartyl-tRNA(Asn) + L-glutamine + ATP + H2O = L-asparaginyl-tRNA(Asn) + L-glutamate + ADP + phosphate + 2 H(+). In terms of biological role, allows the formation of correctly charged Asn-tRNA(Asn) or Gln-tRNA(Gln) through the transamidation of misacylated Asp-tRNA(Asn) or Glu-tRNA(Gln) in organisms which lack either or both of asparaginyl-tRNA or glutaminyl-tRNA synthetases. The reaction takes place in the presence of glutamine and ATP through an activated phospho-Asp-tRNA(Asn) or phospho-Glu-tRNA(Gln). This is Aspartyl/glutamyl-tRNA(Asn/Gln) amidotransferase subunit C from Streptomyces avermitilis (strain ATCC 31267 / DSM 46492 / JCM 5070 / NBRC 14893 / NCIMB 12804 / NRRL 8165 / MA-4680).